We begin with the raw amino-acid sequence, 670 residues long: Protein-glutamine gamma-glutamyltransferase 4 (670 aa).

2 N-linked (GlcNAc...) asparagine glycosylation sites follow: Asn151 and Asn219. Residue Cys255 is part of the active site. N-linked (GlcNAc...) asparagine glycosylation is present at Asn288. Residues His314 and Asp337 contribute to the active site. The Ca(2+) site is built by Asn377, Asp379, Glu429, and Glu434. N-linked (GlcNAc...) asparagine glycans are attached at residues Asn456 and Asn491.

Belongs to the transglutaminase superfamily. Transglutaminase family. As to quaternary structure, homodimer. Ca(2+) is required as a cofactor. Expressed in the coagulating gland and in the dorsal part of the prostate. Not expressed in the brain, heart, kidney, liver, lung, muscle, pancreas, spleen, stomach, testis and thymus.

Its subcellular location is the secreted. The enzyme catalyses L-glutaminyl-[protein] + L-lysyl-[protein] = [protein]-L-lysyl-N(6)-5-L-glutamyl-[protein] + NH4(+). Associated with the mammalian reproductive process. Plays an important role in the formation of the seminal coagulum through the cross-linking of specific proteins present in the seminal plasma. Transglutaminase is also required to stabilize the copulatory plug. The chain is Protein-glutamine gamma-glutamyltransferase 4 from Mus musculus (Mouse).